The following is a 197-amino-acid chain: Probable 26S proteasome non-ATPase regulatory subunit 9 (197 aa).

The 92-residue stretch at 75–166 folds into the PDZ domain; sequence KIVVEMENEN…KIIRVTVIRE (92 aa).

It belongs to the proteasome subunit p27 family.

In terms of biological role, acts as a chaperone during the assembly of the 26S proteasome, specifically of the base subcomplex of the 19S regulatory complex (RC). The sequence is that of Probable 26S proteasome non-ATPase regulatory subunit 9 (psmd-9) from Caenorhabditis elegans.